We begin with the raw amino-acid sequence, 148 residues long: Lysozyme C-1 (148 aa).

The signal sequence occupies residues 1–18 (MKALLVLGFLLLSASVQA). Residues 19 to 148 (KIYERCQFAR…LSGYIRNCGV (130 aa)) form the C-type lysozyme domain. 4 cysteine pairs are disulfide-bonded: Cys-24–Cys-146, Cys-48–Cys-134, Cys-83–Cys-99, and Cys-95–Cys-113. Active-site residues include Glu-53 and Asp-71.

This sequence belongs to the glycosyl hydrolase 22 family. As to quaternary structure, monomer. As to expression, expressed in lung, small intestine and spleen.

The protein localises to the secreted. The enzyme catalyses Hydrolysis of (1-&gt;4)-beta-linkages between N-acetylmuramic acid and N-acetyl-D-glucosamine residues in a peptidoglycan and between N-acetyl-D-glucosamine residues in chitodextrins.. Functionally, lysozymes have primarily a bacteriolytic function; those in tissues and body fluids are associated with the monocyte-macrophage system and enhance the activity of immunoagents. In the intestine they may also have a digestive function. The chain is Lysozyme C-1 (Lyz1) from Rattus norvegicus (Rat).